Here is a 344-residue protein sequence, read N- to C-terminus: Ribosomal RNA large subunit methyltransferase Cfr (344 aa).

Catalysis depends on glutamate 90, which acts as the Proton acceptor. One can recognise a Radical SAM core domain in the interval 97–330; it reads KQGWESFCIS…ATVRTQFGSE (234 aa). Cysteine 104 and cysteine 335 form a disulfide bridge. [4Fe-4S] cluster contacts are provided by cysteine 111, cysteine 115, and cysteine 118. Residues 157-158, serine 188, 211-213, and asparagine 292 each bind S-adenosyl-L-methionine; these read GE and SLH. The active-site S-methylcysteine intermediate is cysteine 335.

The protein belongs to the radical SAM superfamily. RlmN family. Cfr subfamily. [4Fe-4S] cluster serves as cofactor.

It localises to the cytoplasm. It catalyses the reaction adenosine(2503) in 23S rRNA + 2 reduced [2Fe-2S]-[ferredoxin] + 2 S-adenosyl-L-methionine = 8-methyladenosine(2503) in 23S rRNA + 5'-deoxyadenosine + L-methionine + 2 oxidized [2Fe-2S]-[ferredoxin] + S-adenosyl-L-homocysteine. Its function is as follows. Specifically methylates position 8 of adenine 2503 in 23S rRNA. Confers resistance to some classes of antibiotics. The chain is Ribosomal RNA large subunit methyltransferase Cfr from Clostridium botulinum (strain Hall / ATCC 3502 / NCTC 13319 / Type A).